Reading from the N-terminus, the 626-residue chain is Bifurcating [FeFe] hydrogenase beta subunit (626 aa).

198–201 (GGGG) provides a ligand contact to NAD(+). Residues lysine 207 and 224-228 (NGDEG) contribute to the FMN site. Aspartate 229 contributes to the NAD(+) binding site. FMN contacts are provided by residues 312-317 (FVCGEE) and 350-352 (INN). 12 residues coordinate [4Fe-4S] cluster: cysteine 485, cysteine 488, cysteine 491, cysteine 531, cysteine 578, cysteine 581, cysteine 584, cysteine 588, cysteine 608, cysteine 611, cysteine 614, and cysteine 618. 4Fe-4S ferredoxin-type domains follow at residues 569–598 (KKYV…GERG) and 599–626 (KPYT…IELV).

It belongs to the complex I 51 kDa subunit family. As to quaternary structure, heterotrimer composed of HydA (alpha subunit), HydB (beta subunit) and HydC (gamma subunit). Near neutral and acidic pH conditions favor oligomerization of the heterotrimeric holoenzyme. [2Fe-2S] cluster is required as a cofactor. It depends on [4Fe-4S] cluster as a cofactor. Requires FMN as cofactor.

It localises to the cytoplasm. The enzyme catalyses 2 H2 + 2 oxidized [2Fe-2S]-[ferredoxin] + NAD(+) = 2 reduced [2Fe-2S]-[ferredoxin] + NADH + 3 H(+). Catalyzes the oxidation of the physiological electron carriers NADH and reduced ferredoxin, coupled to the production of H(2). Acts as a bifurcating [FeFe] hydrogenase, which uses the exergonic oxidation of reduced ferredoxin to drive the unfavorable oxidation of NADH to produce H(2). The beta subunit contains flavin- and NAD-binding sites and is potentially the site for NADH oxidation, with the subsequent shuttling of electrons to the alpha subunit. This is Bifurcating [FeFe] hydrogenase beta subunit from Thermotoga maritima (strain ATCC 43589 / DSM 3109 / JCM 10099 / NBRC 100826 / MSB8).